Consider the following 341-residue polypeptide: UDP-N-acetyl-alpha-D-glucosaminouronate 4-epimerase (341 aa).

Residues F27, I28, D47, A50, T51, G52, D78, I79, and Q98 each contribute to the NAD(+) site. S103 lines the UDP-N-acetyl-alpha-D-galactosamine pocket. T117 is an NAD(+) binding site. S142, S143, and Y166 together coordinate UDP-N-acetyl-alpha-D-galactosamine. Positions 166 and 170 each coordinate NAD(+). Residue Y166 is the Proton acceptor of the active site. N195 contacts UDP-N-acetyl-alpha-D-galactosamine. Residue V196 participates in NAD(+) binding. Residues V210, Y225, N227, R234, R299, and D302 each contribute to the UDP-N-acetyl-alpha-D-galactosamine site.

This sequence belongs to the NAD(P)-dependent epimerase/dehydratase family. As to quaternary structure, homodimer. It depends on NAD(+) as a cofactor.

It catalyses the reaction UDP-2-acetamido-2-deoxy-alpha-D-glucuronate = UDP-2-acetamido-2-deoxy-alpha-D-galacturonate. The catalysed reaction is UDP-N-acetyl-alpha-D-glucosamine = UDP-N-acetyl-alpha-D-galactosamine. Its pathway is bacterial outer membrane biogenesis; LPS O-antigen biosynthesis. In terms of biological role, epimerase required for the biosynthesis of the B-band O antigen of serotype O6 lipopolysaccharide. Catalyzes the reversible epimerization of UDP-N-acetylglucosaminuronic acid (UDP-GlcNAcA) to UDP-N-acetylgalactosaminuronic acid (UDP-GalNAcA). Also catalyzes the reversible epimerization of UDP-N-acetylglucosamine (UDP-GlcNAc) to UDP-N-acetylgalactosamine (UDP-GalNAc). Has very low epimerase activity with UDP-glucose (UDP-Glc) and UDP-galactose (UDP-Gal). The chain is UDP-N-acetyl-alpha-D-glucosaminouronate 4-epimerase from Pseudomonas aeruginosa.